Here is a 112-residue protein sequence, read N- to C-terminus: MSDESPIIFTDSCCAKVADLIAEENNPDLKLRVFVNGGGCSGFQYGFTFDEIKNDDDFEIEKNGLVFLVDPMSYQYLVGAEIDYTESLQGSQFVIRNPNAETTCGCGSSFSV.

3 residues coordinate iron-sulfur cluster: cysteine 40, cysteine 104, and cysteine 106.

Belongs to the HesB/IscA family. In terms of assembly, homodimer. Iron-sulfur cluster serves as cofactor.

Functionally, required for insertion of 4Fe-4S clusters. The polypeptide is Putative iron-sulfur cluster insertion protein ErpA (Neisseria gonorrhoeae (strain ATCC 700825 / FA 1090)).